The primary structure comprises 565 residues: MLSVKQELLAALAGELETLSPGAGARAAFESPKVAAHGDFACTAAMQLAKPLKLNPRSLGEQLKAALEATPSFQRWVDAIEIAGPGFLNIRLKPAAKQQIIREVLEQAEKFGWLADRGAKMLVEFVSANPTGPLHVGHGRQAALGDAICNLYATQGWGVHREFYYNDAGVQIDTLTKSTQLRAKGFKPGDECWPIDPENPASKAFYNGSYIQDIADDFLACKTVKADDREFTANGDVEDYDNIRQFAVAYLRNEQDKDLQAFNLHFDEYYLESSLYTNGYVEDAVQRLIAGGHTYELDGALWLKSTDYGDDKDRVMRKQDGNYTYFVPDVAYHIQKFKRGYSKVVNIQGTDHHGTIARVRAGLQAADVGIPAGYPDYVLHTMVRVVRGGEEVKISKRAGSYVTLRDLIEWTSKDAVRFFLLSRKPDTEYTFDVDLAVAQNNDNPVYYVQYAHARICSVLAAWGGDAATLKDVDLSALEGPQAQALMLQLAKYPAMLTSAAEGNAPHDVTFYLRELASLYHSYYDAERILVDDEKVKLARLALISATRQVLHNGLAVLGVSAPQRM.

A 'HIGH' region motif is present at residues 128–138 (ANPTGPLHVGH).

The protein belongs to the class-I aminoacyl-tRNA synthetase family. Monomer.

The protein resides in the cytoplasm. The enzyme catalyses tRNA(Arg) + L-arginine + ATP = L-arginyl-tRNA(Arg) + AMP + diphosphate. In Delftia acidovorans (strain DSM 14801 / SPH-1), this protein is Arginine--tRNA ligase.